The chain runs to 265 residues: Transcriptional activator TAF-1 (265 aa).

Disordered stretches follow at residues 1 to 133 (AHGG…SEKA) and 167 to 218 (THLK…KQAE). The span at 35-46 (ASLSLDASAKSS) shows a compositional bias: low complexity. 2 stretches are compositionally biased toward basic and acidic residues: residues 103 to 115 (RETTPDNSGDSKS) and 191 to 209 (NERELKREKRKQSNRESAR). Residues 194-257 (ELKREKRKQS…EKLKLENAAL (64 aa)) enclose the bZIP domain. The segment at 196–215 (KREKRKQSNRESARRSRLRK) is basic motif. Residues 222-257 (LAIRVQSLTAENMTLKSEINKLMENSEKLKLENAAL) are leucine-zipper.

The protein belongs to the bZIP family. Present mainly in roots. Barely detectable in stems and leaves.

It localises to the nucleus. Functionally, trans-activator of a beta-glucuronidase (GUS) reporter gene. Binds to a G-box-related element, (5'-GCAACGTGGC-3'). Also binds to the HEX-motif of wheat histone H3 promoter. The sequence is that of Transcriptional activator TAF-1 (TAF1) from Nicotiana tabacum (Common tobacco).